A 362-amino-acid polypeptide reads, in one-letter code: 3-dehydroquinate synthase (362 aa).

NAD(+)-binding positions include 70–75 (EGEQYK), 104–108 (GVIGD), 128–129 (TT), Lys-141, Lys-150, and 168–171 (TLTT). The Zn(2+) site is built by Glu-183, His-246, and His-263.

It belongs to the sugar phosphate cyclases superfamily. Dehydroquinate synthase family. Co(2+) is required as a cofactor. Zn(2+) serves as cofactor. The cofactor is NAD(+).

Its subcellular location is the cytoplasm. The catalysed reaction is 7-phospho-2-dehydro-3-deoxy-D-arabino-heptonate = 3-dehydroquinate + phosphate. The protein operates within metabolic intermediate biosynthesis; chorismate biosynthesis; chorismate from D-erythrose 4-phosphate and phosphoenolpyruvate: step 2/7. Functionally, catalyzes the conversion of 3-deoxy-D-arabino-heptulosonate 7-phosphate (DAHP) to dehydroquinate (DHQ). The protein is 3-dehydroquinate synthase of Histophilus somni (strain 2336) (Haemophilus somnus).